A 615-amino-acid chain; its full sequence is DNA mismatch repair protein MutL (615 aa).

Residues 363 to 397 are disordered; it reads FAEPAAREPVAPRYTPAPASGSRPAAPWPNAQPGY. A compositionally biased stretch (low complexity) spans 364-391; that stretch reads AEPAAREPVAPRYTPAPASGSRPAAPWP.

The protein belongs to the DNA mismatch repair MutL/HexB family.

Functionally, this protein is involved in the repair of mismatches in DNA. It is required for dam-dependent methyl-directed DNA mismatch repair. May act as a 'molecular matchmaker', a protein that promotes the formation of a stable complex between two or more DNA-binding proteins in an ATP-dependent manner without itself being part of a final effector complex. The protein is DNA mismatch repair protein MutL of Escherichia coli O9:H4 (strain HS).